Reading from the N-terminus, the 411-residue chain is MNYGKKSPQLWAAIENEEQRQQDTIELIASENIVSDAVREAQGSVLTNKYAEGYPNKRYYGGCEFIDQVEQLAIDYAKKLFNAAYVNVQPHSGSQANMAVYQALLKPGDVILGMGMDAGGHLTHGATVNFSGKLYKTYGYGLNPDTEELDYDEIMALAKKVKPQLIVAGASAYSRIIDWQAFRKIADEVGAYLMVDMAHIAGLVATGTHPSPLPIADVVTTTTHKTLRGPRGGMILSKSTELGRKINSAVFPGIQGGPLEHVIAGKAQAFYEDLQPEYAEYIQQVVKNAQAMEKVFNTSKQIRVVSGKTENHLLVLDLTKTGLTGKDAQNLLDRVHITTNKEAIPNDPRSPFITSGLRIGTPAITSRGFKEEDAQKVAELISTALTNPTDEERLQEVAKGVHELTTKYPLN.

120–122 lines the (6S)-5,6,7,8-tetrahydrofolate pocket; it reads GHL. K225 carries the N6-(pyridoxal phosphate)lysine modification. Residue 350–352 coordinates (6S)-5,6,7,8-tetrahydrofolate; that stretch reads SPF.

This sequence belongs to the SHMT family. As to quaternary structure, homodimer. Pyridoxal 5'-phosphate serves as cofactor.

It is found in the cytoplasm. The enzyme catalyses (6R)-5,10-methylene-5,6,7,8-tetrahydrofolate + glycine + H2O = (6S)-5,6,7,8-tetrahydrofolate + L-serine. The protein operates within one-carbon metabolism; tetrahydrofolate interconversion. It participates in amino-acid biosynthesis; glycine biosynthesis; glycine from L-serine: step 1/1. Functionally, catalyzes the reversible interconversion of serine and glycine with tetrahydrofolate (THF) serving as the one-carbon carrier. This reaction serves as the major source of one-carbon groups required for the biosynthesis of purines, thymidylate, methionine, and other important biomolecules. Also exhibits THF-independent aldolase activity toward beta-hydroxyamino acids, producing glycine and aldehydes, via a retro-aldol mechanism. The chain is Serine hydroxymethyltransferase from Limosilactobacillus reuteri (strain DSM 20016) (Lactobacillus reuteri).